The following is a 374-amino-acid chain: Alcohol dehydrogenase class-3 (374 aa).

An N-acetylalanine modification is found at alanine 2. Zn(2+)-binding residues include cysteine 45, histidine 67, cysteine 97, cysteine 100, cysteine 103, cysteine 111, and cysteine 174. Residue lysine 233 is modified to N6-succinyllysine. Serine 247 bears the Phosphoserine mark. Lysine 315 carries the N6-succinyllysine modification. Position 324 is a phosphoserine (serine 324).

It belongs to the zinc-containing alcohol dehydrogenase family. Class-III subfamily. As to quaternary structure, homodimer. Zn(2+) is required as a cofactor.

It is found in the cytoplasm. It carries out the reaction a primary alcohol + NAD(+) = an aldehyde + NADH + H(+). It catalyses the reaction a secondary alcohol + NAD(+) = a ketone + NADH + H(+). The enzyme catalyses S-(hydroxymethyl)glutathione + NADP(+) = S-formylglutathione + NADPH + H(+). The catalysed reaction is S-(hydroxymethyl)glutathione + NAD(+) = S-formylglutathione + NADH + H(+). It carries out the reaction 20-oxo-(5Z,8Z,11Z,14Z)-eicosatetraenoate + NAD(+) + H2O = (5Z,8Z,11Z,14Z)-eicosatetraenedioate + NADH + 2 H(+). It catalyses the reaction 20-hydroxy-(5Z,8Z,11Z,14Z)-eicosatetraenoate + NAD(+) = 20-oxo-(5Z,8Z,11Z,14Z)-eicosatetraenoate + NADH + H(+). The enzyme catalyses S-nitrosoglutathione + NADH + H(+) = S-(hydroxysulfenamide)glutathione + NAD(+). Catalyzes the oxidation of long-chain primary alcohols and the oxidation of S-(hydroxymethyl) glutathione. Also oxidizes long chain omega-hydroxy fatty acids, such as 20-HETE, producing both the intermediate aldehyde, 20-oxoarachidonate and the end product, a dicarboxylic acid, (5Z,8Z,11Z,14Z)-eicosatetraenedioate. Class-III ADH is remarkably ineffective in oxidizing ethanol. Required for clearance of cellular formaldehyde, a cytotoxic and carcinogenic metabolite that induces DNA damage. Also acts as a S-nitroso-glutathione reductase by catalyzing the NADH-dependent reduction of S-nitrosoglutathione, thereby regulating protein S-nitrosylation. In Bos taurus (Bovine), this protein is Alcohol dehydrogenase class-3.